A 143-amino-acid chain; its full sequence is Transcriptional regulator MraZ (143 aa).

2 consecutive SpoVT-AbrB domains span residues 5–47 and 76–119; these read EYQH…PQDE and ATEC…SKER.

This sequence belongs to the MraZ family. As to quaternary structure, forms oligomers.

It localises to the cytoplasm. It is found in the nucleoid. The polypeptide is Transcriptional regulator MraZ (Brevibacillus brevis (strain 47 / JCM 6285 / NBRC 100599)).